The sequence spans 85 residues: Toxin CsE8 (85 aa).

Positions 1–19 (MNSLLMITACLVLFGTVWS) are cleaved as a signal peptide. Positions 20–83 (EKGYLVHEDT…TWPLIGKLCG (64 aa)) constitute an LCN-type CS-alpha/beta domain. 4 cysteine pairs are disulfide-bonded: cysteine 31–cysteine 82, cysteine 35–cysteine 58, cysteine 44–cysteine 63, and cysteine 48–cysteine 65. A Cysteine amide modification is found at cysteine 82.

The protein belongs to the long (4 C-C) scorpion toxin superfamily. Sodium channel inhibitor family. Beta subfamily. As to expression, expressed by the venom gland.

The protein resides in the secreted. Its function is as follows. Beta toxins bind voltage-independently at site-4 of sodium channels (Nav) and shift the voltage of activation toward more negative potentials thereby affecting sodium channel activation and promoting spontaneous and repetitive firing. The polypeptide is Toxin CsE8 (Centruroides sculpturatus (Arizona bark scorpion)).